A 221-amino-acid polypeptide reads, in one-letter code: UPF0758 protein ECA0145 (221 aa).

In terms of domain architecture, MPN spans Ala-99 to Ile-221. Residues His-170, His-172, and Asp-183 each contribute to the Zn(2+) site. Positions His-170–Asp-183 match the JAMM motif motif.

The protein belongs to the UPF0758 family. YicR subfamily.

The polypeptide is UPF0758 protein ECA0145 (Pectobacterium atrosepticum (strain SCRI 1043 / ATCC BAA-672) (Erwinia carotovora subsp. atroseptica)).